The primary structure comprises 225 residues: Translation initiation factor 6 (225 aa).

It belongs to the eIF-6 family.

Binds to the 50S ribosomal subunit and prevents its association with the 30S ribosomal subunit to form the 70S initiation complex. This Hyperthermus butylicus (strain DSM 5456 / JCM 9403 / PLM1-5) protein is Translation initiation factor 6.